The primary structure comprises 355 residues: Membrane cofactor protein (355 aa).

The signal sequence occupies residues 1 to 42; that stretch reads MTAAPLTPDPTHPRRRRKSYTFFSLGIYAEALLFLLSSLSDA. Sushi domains follow at residues 43–104, 105–168, 169–234, and 235–294; these read CEPP…GCIK, VQCT…SCKK, VYCL…ECKV, and VKCP…QCLK. Over 43 to 326 the chain is Extracellular; sequence CEPPPPFEAM…GIFGQEFDAW (284 aa). Cystine bridges form between C107/C149, C135/C166, C171/C219, C200/C232, C237/C279, and C265/C292. N179 carries N-linked (GlcNAc...) asparagine glycosylation. T301 is a glycosylation site (O-linked (GalNAc...) threonine). Residues 327–347 form a helical membrane-spanning segment; the sequence is IIALIVVTSVVGVIVICLIIL. Residues 348-355 are Cytoplasmic-facing; it reads RCSEYRKK.

In terms of assembly, interacts with C3b. Interacts with C4b. Interacts with moesin/MSN. In terms of processing, O-glycosylated. Post-translationally, N-glycosylated. Specifically expressed in testis. Within testis, present only in elongated spermatids and spermatozoa (at protein level).

The protein localises to the cytoplasmic vesicle. Its subcellular location is the secretory vesicle. It localises to the acrosome inner membrane. In terms of biological role, may be involved in the fusion of the spermatozoa with the oocyte during fertilization. The chain is Membrane cofactor protein (Cd46) from Rattus norvegicus (Rat).